Reading from the N-terminus, the 160-residue chain is Protein-export protein SecB (160 aa).

Belongs to the SecB family. In terms of assembly, homotetramer, a dimer of dimers. One homotetramer interacts with 1 SecA dimer.

It is found in the cytoplasm. Functionally, one of the proteins required for the normal export of preproteins out of the cell cytoplasm. It is a molecular chaperone that binds to a subset of precursor proteins, maintaining them in a translocation-competent state. It also specifically binds to its receptor SecA. The sequence is that of Protein-export protein SecB from Burkholderia multivorans (strain ATCC 17616 / 249).